The sequence spans 465 residues: MSEAVPLSTPGASHAGAATDRAPVLDIDSLDMEARGVGRAVDENGEPGKVIFVEGALPGERVTYSSFRRKPTYEQAQVVDILRPSVMRTRPKCAFFGTCGGCSMQHLDMRAQVAIKQRVLEDNLWHLAKLRAEAMFAPIHGPSWGYRYRARLTVRHVAKKGGVLVGFHEKKSSYVADMTSCEVLPPHVSAMLVPLRRLVEQLSIRDRMPQIELAVGSQVTALVLRVLEPINAADETLLREFADAHRVQFWLQPKGPDTVAPFYPLDVQLDYTLPEFGIRMPFKPTDFTQVNHQINRVLVGRALRLLAPERGDRVLDLFCGIGNFTLPLARLAREVVGIEGSETLTSRALANAKENGVDGHTSFASRNLFEVTADDLHALGAFDKFLVDPPREGALAVSKALAEIAQSGEGPLPARIVYVSCNPSTLARDAGLLVHEAGYRLKGAGVVNMFPHTSHVESIALFERD.

Positions 1 to 20 are disordered; that stretch reads MSEAVPLSTPGASHAGAATD. The 69-residue stretch at 12 to 80 folds into the TRAM domain; the sequence is ASHAGAATDR…PTYEQAQVVD (69 aa). Cysteine 93, cysteine 99, cysteine 102, and cysteine 181 together coordinate [4Fe-4S] cluster. S-adenosyl-L-methionine contacts are provided by glutamine 289, phenylalanine 318, asparagine 323, glutamate 339, asparagine 367, and aspartate 388. Cysteine 421 functions as the Nucleophile in the catalytic mechanism.

It belongs to the class I-like SAM-binding methyltransferase superfamily. RNA M5U methyltransferase family. RlmD subfamily.

The catalysed reaction is uridine(1939) in 23S rRNA + S-adenosyl-L-methionine = 5-methyluridine(1939) in 23S rRNA + S-adenosyl-L-homocysteine + H(+). In terms of biological role, catalyzes the formation of 5-methyl-uridine at position 1939 (m5U1939) in 23S rRNA. In Burkholderia thailandensis (strain ATCC 700388 / DSM 13276 / CCUG 48851 / CIP 106301 / E264), this protein is 23S rRNA (uracil(1939)-C(5))-methyltransferase RlmD.